A 397-amino-acid polypeptide reads, in one-letter code: Acetate kinase (397 aa).

Residue Asn-7 participates in Mg(2+) binding. Lys-14 is a binding site for ATP. Substrate is bound at residue Arg-90. Residue Asp-147 is the Proton donor/acceptor of the active site. ATP is bound by residues 207–211, 282–284, and 330–334; these read HLGNG, DFR, and GLGEN. Residue Glu-383 coordinates Mg(2+).

The protein belongs to the acetokinase family. Homodimer. It depends on Mg(2+) as a cofactor. Requires Mn(2+) as cofactor.

Its subcellular location is the cytoplasm. It catalyses the reaction acetate + ATP = acetyl phosphate + ADP. Its pathway is metabolic intermediate biosynthesis; acetyl-CoA biosynthesis; acetyl-CoA from acetate: step 1/2. Catalyzes the formation of acetyl phosphate from acetate and ATP. Can also catalyze the reverse reaction. In Clostridium botulinum (strain 657 / Type Ba4), this protein is Acetate kinase.